Consider the following 486-residue polypeptide: Glutamyl-tRNA(Gln) amidotransferase subunit A (486 aa).

Active-site charge relay system residues include Lys77 and Ser152. Residue Ser176 is the Acyl-ester intermediate of the active site.

It belongs to the amidase family. GatA subfamily. As to quaternary structure, heterotrimer of A, B and C subunits.

It catalyses the reaction L-glutamyl-tRNA(Gln) + L-glutamine + ATP + H2O = L-glutaminyl-tRNA(Gln) + L-glutamate + ADP + phosphate + H(+). Allows the formation of correctly charged Gln-tRNA(Gln) through the transamidation of misacylated Glu-tRNA(Gln) in organisms which lack glutaminyl-tRNA synthetase. The reaction takes place in the presence of glutamine and ATP through an activated gamma-phospho-Glu-tRNA(Gln). The chain is Glutamyl-tRNA(Gln) amidotransferase subunit A from Pediococcus pentosaceus (strain ATCC 25745 / CCUG 21536 / LMG 10740 / 183-1w).